The chain runs to 623 residues: Kelch-like protein diablo (623 aa).

The tract at residues 1 to 54 is disordered; that stretch reads MGDLPGSGSTAQPRDAAVTGTGGNSTAGGGSSVGSTAVDRPPSPARLSHTSEKH. A Phosphothreonine modification is found at Thr-19. Positions 20-32 are enriched in gly residues; it reads GTGGNSTAGGGSS. A BTB domain is found at 72-139; it reads CDVVLNVGGR…CYTAHIMVEE (68 aa). The BACK domain maps to 174–276; it reads CLGIRAFADT…SPKFLVGTVG (103 aa). Kelch repeat units follow at residues 323–369, 371–417, 418–464, 466–511, 513–558, and 559–605; these read VLFA…VLND, LYAV…VLDG, FLYA…VLGG, LYAI…VFNN, IYAV…VVNG, and QLYA…VMRA.

It participates in protein modification; protein ubiquitination. Probable substrate-specific adapter of an E3 ubiquitin-protein ligase complex which mediates the ubiquitination and subsequent proteasomal degradation of target proteins. May have a role in synapse differentiation and growth. This is Kelch-like protein diablo from Drosophila erecta (Fruit fly).